The sequence spans 378 residues: Chorismate synthase (378 aa).

The NADP(+) site is built by Arg48 and Arg54. Residues 125-127, 238-239, Gly278, 293-297, and Arg319 contribute to the FMN site; these read RSS, NA, and KPTSS.

This sequence belongs to the chorismate synthase family. As to quaternary structure, homotetramer. Requires FMNH2 as cofactor.

The enzyme catalyses 5-O-(1-carboxyvinyl)-3-phosphoshikimate = chorismate + phosphate. Its pathway is metabolic intermediate biosynthesis; chorismate biosynthesis; chorismate from D-erythrose 4-phosphate and phosphoenolpyruvate: step 7/7. Functionally, catalyzes the anti-1,4-elimination of the C-3 phosphate and the C-6 proR hydrogen from 5-enolpyruvylshikimate-3-phosphate (EPSP) to yield chorismate, which is the branch point compound that serves as the starting substrate for the three terminal pathways of aromatic amino acid biosynthesis. This reaction introduces a second double bond into the aromatic ring system. This is Chorismate synthase from Azoarcus sp. (strain BH72).